The following is a 224-amino-acid chain: Vesicle transport through interaction with t-SNAREs homolog 1A (224 aa).

Residues 1–199 (MSADFEGYEQ…GMLRRIIQNR (199 aa)) are Cytoplasmic-facing. 2 coiled-coil regions span residues 31–92 (PDEK…KRSR) and 106–185 (DAGN…GKSS). A helical; Anchor for type IV membrane protein transmembrane segment spans residues 200–220 (ILLVILGIIVVITILTAITFF). Over 221 to 224 (VRGH) the chain is Vesicular.

This sequence belongs to the VTI1 family. In terms of assembly, interacts with distinct SNARE complexes that contain either STX5 or STX6. Interacts with NAPA and, to a lesser extent, with NAPG. Identified in a complex containing STX6, STX12, VAMP4 and VTI1A. In terms of tissue distribution, specifically expressed in the neuronal tissues cerebellum, cortex and hippocampus. Isoform 1/VTI1A is expressed in the same neuronal tissues but also in lung, liver, kidney and spleen.

The protein localises to the membrane. Its subcellular location is the cytoplasmic vesicle. It is found in the secretory vesicle. The protein resides in the synaptic vesicle membrane. It localises to the clathrin-coated vesicle membrane. The protein localises to the golgi apparatus membrane. Its function is as follows. V-SNARE that mediates vesicle transport pathways through interactions with t-SNAREs on the target membrane. These interactions are proposed to mediate aspects of the specificity of vesicle trafficking and to promote fusion of the lipid bilayers. Involved in vesicular transport from the late endosomes to the trans-Golgi network. Along with VAMP7, involved in an non-conventional RAB1-dependent traffic route to the cell surface used by KCNIP1 and KCND2. May be concerned with increased secretion of cytokines associated with cellular senescence. This is Vesicle transport through interaction with t-SNAREs homolog 1A (Vti1a) from Rattus norvegicus (Rat).